A 457-amino-acid polypeptide reads, in one-letter code: Putative purine-cytosine permease YxlA (457 aa).

The next 12 helical transmembrane spans lie at 24–44 (FPVW…TIPV), 50–70 (LFWS…FMAS), 90–110 (FGVI…LGFF), 127–147 (IPGS…TIFG), 164–184 (AVFF…GSWI), 192–212 (IFLV…PYVA), 228–248 (FWYS…LGAL), 264–284 (IVQL…FGQM), 316–336 (IIMI…GQSN), 341–361 (FLNF…INLV), 392–412 (IAFV…FYIG), and 420–440 (GGDI…YVLM).

Belongs to the purine-cytosine permease (2.A.39) family.

The protein localises to the cell membrane. In Bacillus subtilis (strain 168), this protein is Putative purine-cytosine permease YxlA (yxlA).